The sequence spans 423 residues: UDP-N-acetylglucosamine 1-carboxyvinyltransferase 1 (423 aa).

A phosphoenolpyruvate-binding site is contributed by 23–24 (KN). Arg96 lines the UDP-N-acetyl-alpha-D-glucosamine pocket. The active-site Proton donor is Cys120. A 2-(S-cysteinyl)pyruvic acid O-phosphothioketal modification is found at Cys120. Residues 125–129 (RPIDL), Asp309, and Val331 each bind UDP-N-acetyl-alpha-D-glucosamine.

Belongs to the EPSP synthase family. MurA subfamily.

It is found in the cytoplasm. The enzyme catalyses phosphoenolpyruvate + UDP-N-acetyl-alpha-D-glucosamine = UDP-N-acetyl-3-O-(1-carboxyvinyl)-alpha-D-glucosamine + phosphate. Its pathway is cell wall biogenesis; peptidoglycan biosynthesis. Cell wall formation. Adds enolpyruvyl to UDP-N-acetylglucosamine. This is UDP-N-acetylglucosamine 1-carboxyvinyltransferase 1 from Streptococcus thermophilus (strain CNRZ 1066).